We begin with the raw amino-acid sequence, 353 residues long: Abasic site processing protein HMCES (353 aa).

Catalysis depends on Cys2, which acts as the Nucleophile. Cys2 carries the thiazolidine linkage to a ring-opened DNA abasic site modification. The active site involves Glu127. Residues Lys148 and Lys151 each participate in a glycyl lysine isopeptide (Lys-Gly) (interchain with G-Cter in SUMO2) cross-link. Ser160 carries the phosphoserine modification. Residues Lys274 and Lys275 each participate in a glycyl lysine isopeptide (Lys-Gly) (interchain with G-Cter in SUMO2) cross-link. The segment at 292-353 (TKSPKKEVPD…DEPMAKKPNS (62 aa)) is disordered. Phosphoserine is present on Ser294. Basic and acidic residues predominate over residues 295–307 (PKKEVPDSPKKDA). Residue Lys305 forms a Glycyl lysine isopeptide (Lys-Gly) (interchain with G-Cter in SUMO2) linkage. Ser321 carries the phosphoserine modification. The PIP-box signature appears at 332–338 (SFLDRWL). Basic and acidic residues predominate over residues 336–353 (RWLKQEKEDEPMAKKPNS). Residues Lys339 and Lys342 each participate in a glycyl lysine isopeptide (Lys-Gly) (interchain with G-Cter in SUMO2) cross-link.

Belongs to the SOS response-associated peptidase family. In terms of assembly, interacts (via PIP-box motif) with PCNA. Expressed in embryonic stem cells.

It localises to the chromosome. With respect to regulation, formation and reversal of DNA-protein cross-link depends on DNA context. Catalyzes formation of the thiazolidine linkage in presence of abasic sites in single-stranded DNA. Mediates the reversal of the thiazolidine cross-link in presence of double stranded DNA. Functionally, sensor of abasic sites in single-stranded DNA (ssDNA) required to preserve genome integrity by promoting error-free repair of abasic sites. Acts as an enzyme that recognizes and binds abasic sites in ssDNA at replication forks and chemically modifies the lesion by forming a covalent cross-link with DNA: forms a stable thiazolidine linkage between a ring-opened abasic site and the alpha-amino and sulfhydryl substituents of its N-terminal catalytic cysteine residue. Promotes error-free repair by protecting abasic sites from translesion synthesis (TLS) polymerases and endonucleases that are error-prone and would generate mutations and double-strand breaks. The HMCES DNA-protein cross-link is then either reversed or degraded. HMCES is able to catalyze the reversal of its thiazolidine cross-link and cycle between a cross-link and a non-cross-linked state depending on DNA context: mediates self-reversal of the thiazolidine cross-link in double stranded DNA, allowing APEX1 to initiate downstream repair of abasic sites. The HMCES DNA-protein cross-link can also be degraded by the SPRTN metalloprotease following unfolding by the BRIP1/FANCJ helicase. Has preference for ssDNA, but can also accommodate double-stranded DNA with 3' or 5' overhang (dsDNA), and dsDNA-ssDNA 3' junction. Plays a protective role during somatic hypermutation of immunoglobulin genes in B-cells: acts via its ability to form covalent cross-links with abasic sites, thereby limiting the accumulation of deletions in somatic hypermutation target regions. Also involved in class switch recombination (CSR) in B-cells independently of the formation of a DNA-protein cross-link: acts by binding and protecting ssDNA overhangs to promote DNA double-strand break repair through the microhomology-mediated alternative-end-joining (Alt-EJ) pathway. Acts as a protease: mediates autocatalytic processing of its N-terminal methionine in order to expose the catalytic cysteine. The sequence is that of Abasic site processing protein HMCES from Mus musculus (Mouse).